Reading from the N-terminus, the 494-residue chain is 4-trimethylaminobutyraldehyde dehydrogenase (494 aa).

Ser-2 bears the N-acetylserine mark. The residue at position 30 (Lys-30) is an N6-acetyllysine; alternate. Lys-30 bears the N6-succinyllysine; alternate mark. An N6-succinyllysine modification is found at Lys-59. NAD(+)-binding positions include Lys-180 and 232-236; that span reads GSVPT. The Proton acceptor role is filled by Glu-254. The Nucleophile role is filled by Cys-288. Lys-298 carries the N6-acetyllysine modification. Lys-303 is subject to N6-acetyllysine; alternate. Lys-303 is subject to N6-succinyllysine; alternate. Lys-344 carries the post-translational modification N6-acetyllysine. Glu-391 is a binding site for NAD(+).

Belongs to the aldehyde dehydrogenase family. As to quaternary structure, homotetramer.

It is found in the cytoplasm. The protein localises to the cytosol. It catalyses the reaction 4-(trimethylamino)butanal + NAD(+) + H2O = 4-(trimethylamino)butanoate + NADH + 2 H(+). The enzyme catalyses an aldehyde + NAD(+) + H2O = a carboxylate + NADH + 2 H(+). The catalysed reaction is 4-aminobutanal + NAD(+) + H2O = 4-aminobutanoate + NADH + 2 H(+). It carries out the reaction formaldehyde + NAD(+) + H2O = formate + NADH + 2 H(+). It catalyses the reaction acetaldehyde + NAD(+) + H2O = acetate + NADH + 2 H(+). The enzyme catalyses imidazole-4-acetaldehyde + NAD(+) + H2O = imidazole-4-acetate + NADH + 2 H(+). The catalysed reaction is acrolein + NAD(+) + H2O = acrylate + NADH + 2 H(+). It carries out the reaction (5-hydroxyindol-3-yl)acetaldehyde + NAD(+) + H2O = (5-hydroxyindol-3-yl)acetate + NADH + 2 H(+). It catalyses the reaction 3,4-dihydroxyphenylacetaldehyde + NAD(+) + H2O = 3,4-dihydroxyphenylacetate + NADH + 2 H(+). The enzyme catalyses spermine monoaldehyde + NAD(+) + H2O = N-(2-carboxyethyl)spermidine + NADH + 2 H(+). The catalysed reaction is propanal + NAD(+) + H2O = propanoate + NADH + 2 H(+). It carries out the reaction butanal + NAD(+) + H2O = butanoate + NADH + 2 H(+). It catalyses the reaction pentanal + NAD(+) + H2O = pentanoate + NADH + 2 H(+). The enzyme catalyses hexanal + NAD(+) + H2O = hexanoate + NADH + 2 H(+). The protein operates within amine and polyamine biosynthesis; carnitine biosynthesis. Its function is as follows. Converts gamma-trimethylaminobutyraldehyde into gamma-butyrobetaine with high efficiency (in vitro). Can catalyze the irreversible oxidation of a broad range of aldehydes to the corresponding acids in an NAD-dependent reaction, but with low efficiency. Catalyzes the oxidation of aldehydes arising from biogenic amines and polyamines. The sequence is that of 4-trimethylaminobutyraldehyde dehydrogenase from Mus musculus (Mouse).